Consider the following 177-residue polypeptide: MSTSVSPVVRLVRGDITDQSVDVIVNAANSSLLGGGGVDGAIHRRGGPDILAACRELRASRYGKGLPTGQAVATTAGRLDARWIVHTVGPVFSGAQDRSALLASCYRESLRLAAELGARSIAFPAISTGIYGWPMDDGARIAVRTVLAETVEPVEEVRFVLFDAHAYVEFEEVLAMR.

The Macro domain occupies 1–177 (MSTSVSPVVR…VEFEEVLAMR (177 aa)).

It belongs to the MacroD-type family.

The polypeptide is Macro domain-containing protein in non 5'region (Streptomyces griseus).